Reading from the N-terminus, the 72-residue chain is Translation initiation factor IF-1 (72 aa).

One can recognise an S1-like domain in the interval 1 to 72; that stretch reads MAKDDVIEID…DKGRITFRYK (72 aa).

It belongs to the IF-1 family. In terms of assembly, component of the 30S ribosomal translation pre-initiation complex which assembles on the 30S ribosome in the order IF-2 and IF-3, IF-1 and N-formylmethionyl-tRNA(fMet); mRNA recruitment can occur at any time during PIC assembly.

Its subcellular location is the cytoplasm. Functionally, one of the essential components for the initiation of protein synthesis. Stabilizes the binding of IF-2 and IF-3 on the 30S subunit to which N-formylmethionyl-tRNA(fMet) subsequently binds. Helps modulate mRNA selection, yielding the 30S pre-initiation complex (PIC). Upon addition of the 50S ribosomal subunit IF-1, IF-2 and IF-3 are released leaving the mature 70S translation initiation complex. The sequence is that of Translation initiation factor IF-1 from Sulfurovum sp. (strain NBC37-1).